The following is a 130-amino-acid chain: Large ribosomal subunit protein bL21 (130 aa).

This sequence belongs to the bacterial ribosomal protein bL21 family. As to quaternary structure, part of the 50S ribosomal subunit. Contacts protein L20.

In terms of biological role, this protein binds to 23S rRNA in the presence of protein L20. This Trichormus variabilis (strain ATCC 29413 / PCC 7937) (Anabaena variabilis) protein is Large ribosomal subunit protein bL21.